Here is a 465-residue protein sequence, read N- to C-terminus: 3-isopropylmalate dehydratase large subunit (465 aa).

[4Fe-4S] cluster-binding residues include C346, C406, and C409.

This sequence belongs to the aconitase/IPM isomerase family. LeuC type 1 subfamily. In terms of assembly, heterodimer of LeuC and LeuD. The cofactor is [4Fe-4S] cluster.

It catalyses the reaction (2R,3S)-3-isopropylmalate = (2S)-2-isopropylmalate. It participates in amino-acid biosynthesis; L-leucine biosynthesis; L-leucine from 3-methyl-2-oxobutanoate: step 2/4. In terms of biological role, catalyzes the isomerization between 2-isopropylmalate and 3-isopropylmalate, via the formation of 2-isopropylmaleate. The chain is 3-isopropylmalate dehydratase large subunit from Leptospira interrogans serogroup Icterohaemorrhagiae serovar copenhageni (strain Fiocruz L1-130).